The following is a 529-amino-acid chain: Zinc finger CCCH domain-containing protein 65 (529 aa).

Positions 1–10 (MADADARAPP) are enriched in basic and acidic residues. 2 disordered regions span residues 1–36 (MADA…EDEV) and 134–179 (PARK…GSYV). Low complexity predominate over residues 14–31 (PGATPIGSISPSSAAPAA). 3 C3H1-type zinc fingers span residues 108-136 (RPGE…HPAR), 237-265 (GSSQ…HRDG), and 285-313 (RPGE…HPDP). Residues 313-347 (PSNVASKDPQLEHENGDAPQQDVQGSSSQPNASIW) form a disordered region. The span at 333 to 344 (QDVQGSSSQPNA) shows a compositional bias: polar residues. C3H1-type zinc fingers lie at residues 433–461 (RPGQ…HPRS) and 477–505 (KPDQ…HPFN).

This is Zinc finger CCCH domain-containing protein 65 from Oryza sativa subsp. japonica (Rice).